We begin with the raw amino-acid sequence, 164 residues long: Peptide deformylase (164 aa).

Residues Cys87 and His129 each contribute to the Fe cation site. The active site involves Glu130. His133 provides a ligand contact to Fe cation.

It belongs to the polypeptide deformylase family. The cofactor is Fe(2+).

The catalysed reaction is N-terminal N-formyl-L-methionyl-[peptide] + H2O = N-terminal L-methionyl-[peptide] + formate. Removes the formyl group from the N-terminal Met of newly synthesized proteins. Requires at least a dipeptide for an efficient rate of reaction. N-terminal L-methionine is a prerequisite for activity but the enzyme has broad specificity at other positions. In Thermotoga neapolitana (strain ATCC 49049 / DSM 4359 / NBRC 107923 / NS-E), this protein is Peptide deformylase.